The following is a 173-amino-acid chain: Alkyl hydroperoxide reductase AhpD (173 aa).

Cysteine 131 functions as the Proton donor in the catalytic mechanism. Cysteine 131 and cysteine 134 are joined by a disulfide. The active-site Cysteine sulfenic acid (-SOH) intermediate is the cysteine 134.

Belongs to the AhpD family.

It catalyses the reaction N(6)-[(R)-dihydrolipoyl]-L-lysyl-[lipoyl-carrier protein] + a hydroperoxide = N(6)-[(R)-lipoyl]-L-lysyl-[lipoyl-carrier protein] + an alcohol + H2O. Antioxidant protein with alkyl hydroperoxidase activity. Required for the reduction of the AhpC active site cysteine residues and for the regeneration of the AhpC enzyme activity. The chain is Alkyl hydroperoxide reductase AhpD from Rhizorhabdus wittichii (strain DSM 6014 / CCUG 31198 / JCM 15750 / NBRC 105917 / EY 4224 / RW1) (Sphingomonas wittichii).